We begin with the raw amino-acid sequence, 326 residues long: 4-hydroxy-3-methylbut-2-enyl diphosphate reductase 1 (326 aa).

Residue Cys-27 participates in [4Fe-4S] cluster binding. (2E)-4-hydroxy-3-methylbut-2-enyl diphosphate contacts are provided by His-56 and His-89. Dimethylallyl diphosphate contacts are provided by His-56 and His-89. The isopentenyl diphosphate site is built by His-56 and His-89. Cys-111 lines the [4Fe-4S] cluster pocket. His-139 is a (2E)-4-hydroxy-3-methylbut-2-enyl diphosphate binding site. His-139 lines the dimethylallyl diphosphate pocket. Residue His-139 coordinates isopentenyl diphosphate. Glu-141 serves as the catalytic Proton donor. Thr-179 is a (2E)-4-hydroxy-3-methylbut-2-enyl diphosphate binding site. Cys-209 lines the [4Fe-4S] cluster pocket. (2E)-4-hydroxy-3-methylbut-2-enyl diphosphate-binding residues include Ser-237, Ser-238, Asn-239, and Ser-281. Residues Ser-237, Ser-238, Asn-239, and Ser-281 each coordinate dimethylallyl diphosphate. Isopentenyl diphosphate is bound by residues Ser-237, Ser-238, Asn-239, and Ser-281.

Belongs to the IspH family. [4Fe-4S] cluster serves as cofactor.

It catalyses the reaction isopentenyl diphosphate + 2 oxidized [2Fe-2S]-[ferredoxin] + H2O = (2E)-4-hydroxy-3-methylbut-2-enyl diphosphate + 2 reduced [2Fe-2S]-[ferredoxin] + 2 H(+). It carries out the reaction dimethylallyl diphosphate + 2 oxidized [2Fe-2S]-[ferredoxin] + H2O = (2E)-4-hydroxy-3-methylbut-2-enyl diphosphate + 2 reduced [2Fe-2S]-[ferredoxin] + 2 H(+). Its pathway is isoprenoid biosynthesis; dimethylallyl diphosphate biosynthesis; dimethylallyl diphosphate from (2E)-4-hydroxy-3-methylbutenyl diphosphate: step 1/1. It functions in the pathway isoprenoid biosynthesis; isopentenyl diphosphate biosynthesis via DXP pathway; isopentenyl diphosphate from 1-deoxy-D-xylulose 5-phosphate: step 6/6. Functionally, catalyzes the conversion of 1-hydroxy-2-methyl-2-(E)-butenyl 4-diphosphate (HMBPP) into a mixture of isopentenyl diphosphate (IPP) and dimethylallyl diphosphate (DMAPP). Acts in the terminal step of the DOXP/MEP pathway for isoprenoid precursor biosynthesis. The polypeptide is 4-hydroxy-3-methylbut-2-enyl diphosphate reductase 1 (Burkholderia pseudomallei (strain K96243)).